A 158-amino-acid chain; its full sequence is uncharacterized protein (158 aa).

Residues 1–26 (MRASRSPPSPRRCHHHHEATGAASGA) are disordered.

This is an uncharacterized protein from Homo sapiens (Human).